Consider the following 340-residue polypeptide: UDP-3-O-(3-hydroxymyristoyl)glucosamine N-acyltransferase (340 aa).

Histidine 239 acts as the Proton acceptor in catalysis.

Belongs to the transferase hexapeptide repeat family. LpxD subfamily. In terms of assembly, homotrimer.

It catalyses the reaction a UDP-3-O-[(3R)-3-hydroxyacyl]-alpha-D-glucosamine + a (3R)-hydroxyacyl-[ACP] = a UDP-2-N,3-O-bis[(3R)-3-hydroxyacyl]-alpha-D-glucosamine + holo-[ACP] + H(+). The catalysed reaction is UDP-3-O-[(3R)-3-hydroxytetradecanoyl]-alpha-D-glucosamine + (3R)-hydroxytetradecanoyl-[ACP] = UDP-2-N,3-O-bis[(3R)-3-hydroxytetradecanoyl]-alpha-D-glucosamine + holo-[ACP] + H(+). The protein operates within glycolipid biosynthesis; lipid IV(A) biosynthesis; lipid IV(A) from (3R)-3-hydroxytetradecanoyl-[acyl-carrier-protein] and UDP-N-acetyl-alpha-D-glucosamine: step 3/6. In terms of biological role, catalyzes the N-acylation of UDP-3-O-(hydroxytetradecanoyl)glucosamine using 3-hydroxytetradecanoyl-ACP as the acyl donor. Is involved in the biosynthesis of lipid A, a phosphorylated glycolipid that anchors the lipopolysaccharide to the outer membrane of the cell. This is UDP-3-O-(3-hydroxymyristoyl)glucosamine N-acyltransferase from Sodalis glossinidius (strain morsitans).